The following is an 81-amino-acid chain: Antitoxin VapB28 (81 aa).

In terms of biological role, antitoxin component of a type II toxin-antitoxin (TA) system. This chain is Antitoxin VapB28 (vapB28), found in Mycobacterium tuberculosis (strain CDC 1551 / Oshkosh).